A 238-amino-acid polypeptide reads, in one-letter code: Small ribosomal subunit protein uS3 (238 aa).

The KH type-2 domain occupies 39–107 (MREFIHDYAK…ELHLNIVEIR (69 aa)). Residues 212-222 (PQAHDRRHSEA) show a composition bias toward basic and acidic residues. Positions 212 to 238 (PQAHDRRHSEAQEGAAPRPPRRDRERA) are disordered.

Belongs to the universal ribosomal protein uS3 family. In terms of assembly, part of the 30S ribosomal subunit. Forms a tight complex with proteins S10 and S14.

Binds the lower part of the 30S subunit head. Binds mRNA in the 70S ribosome, positioning it for translation. This Cereibacter sphaeroides (strain ATCC 17025 / ATH 2.4.3) (Rhodobacter sphaeroides) protein is Small ribosomal subunit protein uS3.